A 784-amino-acid chain; its full sequence is MDADDSRAPKGSLRKFLEHLSGAGKAIGVLTSGGDAQGMNAAVRAVVRMGIYVGAKVYFIYEGYQGMVDGGSNIAEADWESVSSILQVGGTIIGSARCQAFRTREGRLKAACNLLQRGITNLCVIGGDGSLTGANLFRKEWSGLLEELARNGQIDKEAVQKYAYLNVVGMVGSIDNDFCGTDMTIGTDSALHRIIEVVDAIMTTAQSHQRTFVLEVMGRHCGYLALVSALACGADWVFLPESPPEEGWEEQMCVKLSENRARKKRLNIIIVAEGAIDTQNKPITSEKIKELVVTQLGYDTRVTILGHVQRGGTPSAFDRILASRMGVEAVIALLEATPDTPACVVSLNGNHAVRLPLMECVQMTQDVQKAMDERRFQDAVRLRGRSFAGNLNTYKRLAIKLPDDQIPKTNCNVAVINVGAPAAGMNAAVRSAVRVGIADGHRMLAIYDGFDGFAKGQIKEIGWTDVGGWTGQGGSILGTKRVLPGKYLEEIATQMRTHSINALLIIGGFEAYLGLLELSAAREKHEEFCVPMVMVPATVSNNVPGSDFSIGADTALNTITDTCDRIKQSASGTKRRVFIIETMGGYCGYLANMGGLAAGADAAYIFEEPFDIRDLQSNVEHLTEKMKTTIQRGLVLRNESCSENYTTDFIYQLYSEEGKGVFDCRKNVLGHMQQGGAPSPFDRNFGTKISARAMEWITAKLKEARGRGKKFTTDDSICVLGISKRNVIFQPVAELKKQTDFEHRIPKEQWWLKLRPLMKILAKYKASYDVSDSGQLEHVQPWSV.

N-acetylmethionine is present on Met-1. The segment at 1 to 399 is N-terminal catalytic PFK domain 1; the sequence is MDADDSRAPK…NLNTYKRLAI (399 aa). Ser-6, Ser-12, and Ser-21 each carry phosphoserine. ATP is bound by residues Gly-34, 97 to 98, and 127 to 130; these read RC and GDGS. Asp-128 serves as a coordination point for Mg(2+). Ser-142 is modified (phosphoserine). Substrate is bound by residues 173-175, Arg-210, 217-219, Glu-273, Arg-301, and 307-310; these read SID, MGR, and HVQR. Asp-175 serves as the catalytic Proton acceptor. Ser-386 carries the post-translational modification Phosphoserine. Lys-395 carries the post-translational modification N6-acetyllysine. Positions 400–411 are interdomain linker; that stretch reads KLPDDQIPKTNC. Residues 412-784 are C-terminal regulatory PFK domain 2; it reads NVAVINVGAP…QLEHVQPWSV (373 aa). Beta-D-fructose 2,6-bisphosphate is bound at residue Arg-481. Lys-486 carries the N6-acetyllysine modification. Beta-D-fructose 2,6-bisphosphate contacts are provided by residues 538–542, Arg-576, 583–585, and Glu-639; these read TVSNN and MGG. Ser-540 carries an O-linked (GlcNAc) serine glycan. The residue at position 651 (Tyr-651) is a Phosphotyrosine. Beta-D-fructose 2,6-bisphosphate contacts are provided by residues Arg-665 and 671 to 674; that span reads HMQQ. At Lys-688 the chain carries N6-acetyllysine. Beta-D-fructose 2,6-bisphosphate is bound at residue Arg-744. Ser-783 carries the phosphoserine modification.

The protein belongs to the phosphofructokinase type A (PFKA) family. ATP-dependent PFK group I subfamily. Eukaryotic two domain clade 'E' sub-subfamily. Homo- and heterotetramers. Phosphofructokinase (PFK) enzyme functions as a tetramer composed of different combinations of 3 types of subunits, called PFKM (where M stands for Muscle), PFKL (Liver) and PFKP (Platelet). The composition of the PFK tetramer differs according to the tissue type it is present in. In muscles, it is composed of 4 PFKM subunits (also called M4). In the liver, the predominant form is a tetramer of PFKL subunits (L4). In erythrocytes, both PFKM and PFKL subunits randomly tetramerize to form M4, L4 and other combinations (ML3, M2L2, M3L). In platelets, brain and fibroblasts, PFK contains a higher proportion of PFKP subunits. The kinetic and regulatory properties of the tetrameric enzyme are dependent on the subunit composition, hence can vary across tissues. Interacts with ATG4B; promoting phosphorylation of ATG4B. It depends on Mg(2+) as a cofactor. In terms of processing, phosphorylation at Ser-386 promotes interaction with ATG4B. GlcNAcylation decreases enzyme activity.

Its subcellular location is the cytoplasm. The enzyme catalyses beta-D-fructose 6-phosphate + ATP = beta-D-fructose 1,6-bisphosphate + ADP + H(+). The protein operates within carbohydrate degradation; glycolysis; D-glyceraldehyde 3-phosphate and glycerone phosphate from D-glucose: step 3/4. Allosterically activated by ADP, AMP, or fructose 2,6-bisphosphate, and allosterically inhibited by ATP or citrate. Functionally, catalyzes the phosphorylation of D-fructose 6-phosphate to fructose 1,6-bisphosphate by ATP, the first committing step of glycolysis. The protein is ATP-dependent 6-phosphofructokinase, platelet type (PFKP) of Homo sapiens (Human).